We begin with the raw amino-acid sequence, 293 residues long: Digeranylgeranylglyceryl phosphate synthase (293 aa).

Helical transmembrane passes span 26 to 46, 50 to 70, 107 to 127, 140 to 160, 215 to 235, 237 to 257, and 273 to 293; these read LMYG…FSDL, LLGY…NDYF, FVAA…VSVL, FAGN…GSII, IASL…FLLP, FLFD…LIYV, and YRKV…AGAF.

It belongs to the UbiA prenyltransferase family. DGGGP synthase subfamily. Requires Mg(2+) as cofactor.

It is found in the cell membrane. It catalyses the reaction sn-3-O-(geranylgeranyl)glycerol 1-phosphate + (2E,6E,10E)-geranylgeranyl diphosphate = 2,3-bis-O-(geranylgeranyl)-sn-glycerol 1-phosphate + diphosphate. It functions in the pathway membrane lipid metabolism; glycerophospholipid metabolism. Its function is as follows. Prenyltransferase that catalyzes the transfer of the geranylgeranyl moiety of geranylgeranyl diphosphate (GGPP) to the C2 hydroxyl of (S)-3-O-geranylgeranylglyceryl phosphate (GGGP). This reaction is the second ether-bond-formation step in the biosynthesis of archaeal membrane lipids. The chain is Digeranylgeranylglyceryl phosphate synthase from Archaeoglobus fulgidus (strain ATCC 49558 / DSM 4304 / JCM 9628 / NBRC 100126 / VC-16).